A 523-amino-acid chain; its full sequence is Flavin-dependent halogenase armH5 (523 aa).

FAD contacts are provided by Gly-17, Ala-20, and Glu-50. Positions 328 and 329 each coordinate chloride. FAD is bound at residue Val-330.

It belongs to the flavin-dependent halogenase family.

It catalyses the reaction melleolide F + FADH2 + chloride + O2 = 6'-chloromelleolide F + FAD + 2 H2O + H(+). Its function is as follows. Flavin-dependent halogenase involved in the biosynthesis of melleolides, a range of antifungal and phytotoxic polyketide derivatives composed of an orsellinic acid (OA) moiety esterified to various sesquiterpene alcohols. The halogenase catalyzes the transfer of a single chlorine atom to the melleolide backbone, resulting in a 6'-chloromelleolide product. The enzyme acts on free substrate and does not depend on carrier-protein-dependent acceptor molecules. This Armillaria mellea (Honey mushroom) protein is Flavin-dependent halogenase armH5.